A 165-amino-acid polypeptide reads, in one-letter code: Copper-resistant cuproprotein CopI (165 aa).

A signal peptide spans 1-23 (MKNRILRPALLCVAALFATTAQA). Positions 25 to 42 (AGHDHGSAHAGAHAHDAD) are enriched in basic and acidic residues. Residues 25-50 (AGHDHGSAHAGAHAHDADTPYGRPGD) are disordered. Residues H93, C148, H153, and M158 each contribute to the Cu(2+) site.

Belongs to the CopI family. As to quaternary structure, monomer.

Its subcellular location is the periplasm. Its function is as follows. Involved in copper tolerance. Required for copper resistance under both aerobic and anaerobic photosynthetic growth conditions. Binds copper. Could be an important defense against copper in the periplasm and may protect not only c type cytochromes but also other proteins with cysteine residues from copper ions that may catalyze nonnative disulfide bond formation. This Rubrivivax gelatinosus (Rhodocyclus gelatinosus) protein is Copper-resistant cuproprotein CopI.